Consider the following 249-residue polypeptide: Suppressor of silencing P0 (249 aa).

Residues 63-67 (LPFHL) enclose the F-box-like domain.

Belongs to the polerovirus P0 protein family. As to quaternary structure, interacts (via F-box-like domain) with host AGO1; this interaction targets AGO1 for degradation, and thereby suppresses the silencing function of the latter. Interacts (via F-box-like domain) with host ASK1 and ASK2 (SKP proteins); these interactions are essential for viral pathogenicity. Part of a SCF P0 complex composed of P0 and the host proteins SKP and CUL1.

Suppressor of RNA-mediated gene silencing, also known as post-transcriptional gene silencing (PTGS), a mechanism of plant viral defense that limits the accumulation of viral RNAs. The P0 protein suppresses local PTGS using its F-box-like domain to mediate destabilization and degradation of the AGO1 protein. This Turnip yellows virus (isolate FL-1) (TuYV) protein is Suppressor of silencing P0.